Consider the following 231-residue polypeptide: Phosphatidylserine decarboxylase proenzyme (231 aa).

Ser-189 (schiff-base intermediate with substrate; via pyruvic acid) is an active-site residue. Position 189 is a pyruvic acid (Ser); by autocatalysis (Ser-189).

It belongs to the phosphatidylserine decarboxylase family. PSD-A subfamily. In terms of assembly, heterodimer of a large membrane-associated beta subunit and a small pyruvoyl-containing alpha subunit. Pyruvate is required as a cofactor. In terms of processing, is synthesized initially as an inactive proenzyme. Formation of the active enzyme involves a self-maturation process in which the active site pyruvoyl group is generated from an internal serine residue via an autocatalytic post-translational modification. Two non-identical subunits are generated from the proenzyme in this reaction, and the pyruvate is formed at the N-terminus of the alpha chain, which is derived from the carboxyl end of the proenzyme. The post-translation cleavage follows an unusual pathway, termed non-hydrolytic serinolysis, in which the side chain hydroxyl group of the serine supplies its oxygen atom to form the C-terminus of the beta chain, while the remainder of the serine residue undergoes an oxidative deamination to produce ammonia and the pyruvoyl prosthetic group on the alpha chain.

The protein localises to the cell membrane. It carries out the reaction a 1,2-diacyl-sn-glycero-3-phospho-L-serine + H(+) = a 1,2-diacyl-sn-glycero-3-phosphoethanolamine + CO2. The protein operates within phospholipid metabolism; phosphatidylethanolamine biosynthesis; phosphatidylethanolamine from CDP-diacylglycerol: step 2/2. Catalyzes the formation of phosphatidylethanolamine (PtdEtn) from phosphatidylserine (PtdSer). This is Phosphatidylserine decarboxylase proenzyme from Chelativorans sp. (strain BNC1).